The primary structure comprises 200 residues: Small ribosomal subunit protein mS26 (200 aa).

The N-terminal 27 residues, 1–27 (MLRALNRLAARPGGQPPTLLLLPVRGR), are a transit peptide targeting the mitochondrion. At lysine 159 the chain carries N6-acetyllysine.

The protein belongs to the mitochondrion-specific ribosomal protein mS26 family. As to quaternary structure, component of the mitochondrial ribosome small subunit (28S) which comprises a 12S rRNA and about 30 distinct proteins.

It is found in the mitochondrion. The sequence is that of Small ribosomal subunit protein mS26 (Mrps26) from Rattus norvegicus (Rat).